Reading from the N-terminus, the 589-residue chain is 3-hydroxy-3-methylglutaryl coenzyme A reductase 2-B (589 aa).

The Lumenal portion of the chain corresponds to 1–35 (MDVRRRPVTKTLTAGEPLKSQNQHSSSLKASDALP). A helical membrane pass occupies residues 36–56 (LPLYLTNGLFFTMFFSVMYFL). Topologically, residues 57–79 (LHRWREKIRNSVPLHVVTLSELA) are cytoplasmic. The chain crosses the membrane as a helical span at residues 80–100 (ALVLLVASVIYLLGFFGIGFV). At 101 to 544 (QSLIRPSPDS…SKESPGPNSR (444 aa)) the chain is on the lumenal side. The N-linked (GlcNAc...) asparagine glycan is linked to Asn-256. The active-site Charge relay system is Glu-268. Asn-332 carries an N-linked (GlcNAc...) asparagine glycan. Catalysis depends on charge relay system residues Lys-400 and Asp-476. Residues 545–565 (LLASIVAGSVLAGELSLMSAL) traverse the membrane as a helical segment. Residues 566-589 (AAGQLVKSHMKFNRSSKDVSKLSS) lie on the Cytoplasmic side of the membrane. Residue His-574 is the Proton donor of the active site.

It belongs to the HMG-CoA reductase family.

The protein resides in the endoplasmic reticulum membrane. The enzyme catalyses (R)-mevalonate + 2 NADP(+) + CoA = (3S)-3-hydroxy-3-methylglutaryl-CoA + 2 NADPH + 2 H(+). The protein operates within metabolic intermediate biosynthesis; (R)-mevalonate biosynthesis; (R)-mevalonate from acetyl-CoA: step 3/3. In terms of biological role, catalyzes the synthesis of mevalonate, the specific precursor of all isoprenoid compounds present in plants. Component of the triterpene saponins (e.g. ginsenosides or panaxosides) and phytosterols biosynthetic pathways. Promotes triterpenes accumulation in roots. In Panax ginseng (Korean ginseng), this protein is 3-hydroxy-3-methylglutaryl coenzyme A reductase 2-B.